We begin with the raw amino-acid sequence, 559 residues long: MATALSEEELDNEDYYSLLNVRREASSEELKAAYRRLCMLYHPDKHRDPELKSQAERLFNLVHQAYEVLSDPQTRAIYDIYGKRGLEMEGWEVVERKRTPAEIREEFERLQREREERRLQQRTNPKGTISVGVDATDLFDRYDEEYEDVSGSGFPQIEINKMHISQSIEAPLTATDTAILSGSLSTQNGNGGGSVNFALRRVTSAKGWGELEFGAGDLQGPLFGLKLFRNLTPRCFVTTNCALQFSSRGIRPGLTTVLARNLDKNTVGYLQWRWGIQSAMNTSIVRDTKTCHFTVALQLGIPHSFALISYQHKFQDDDQTRVKGSLKAGFFGTIVEYGAERKISRHSVLGAAVSIGVPQGVSLKVKLNRASQTYFFPIHLTDQLLPSAVFYATVGPLVVYLAVHRLIIRPYLRAQKEKELEKQRENTASDILQKKQEAEAAVRLMQESVRRIIEAEESRMGLIIVNAWYGKFVNDKSRKNEKVKVIDVTVPLQCLVKDSKLILTEASKAGLPGFYDPCVGEEKSLRVLYQFRGVLHQVMVPDSEALRIPKQSHRIDTDG.

N-acetylalanine is present on alanine 2. The 69-residue stretch at 14–82 (DYYSLLNVRR…QTRAIYDIYG (69 aa)) folds into the J domain. Phosphoserine is present on serine 204. A coiled-coil region spans residues 415–457 (QKEKELEKQRENTASDILQKKQEAEAAVRLMQESVRRIIEAEE).

This sequence belongs to the DNAJC11 family. In terms of assembly, associates with the mitochondrial contact site and cristae organizing system (MICOS) complex, composed of at least MICOS10/MIC10, CHCHD3/MIC19, CHCHD6/MIC25, APOOL/MIC27, IMMT/MIC60, APOO/MIC23/MIC26 and QIL1/MIC13. This complex was also known under the names MINOS or MitOS complex. The MICOS complex associates with mitochondrial outer membrane proteins SAMM50, MTX1 and MTX2 (together described as components of the mitochondrial outer membrane sorting assembly machinery (SAM) complex) and DNAJC11, mitochondrial inner membrane protein TMEM11 and with HSPA9. The MICOS and SAM complexes together with DNAJC11 are part of a large protein complex spanning both membranes termed the mitochondrial intermembrane space bridging (MIB) complex.

Its subcellular location is the mitochondrion. The protein localises to the mitochondrion outer membrane. Functionally, required for mitochondrial inner membrane organization. Seems to function through its association with the MICOS complex and the mitochondrial outer membrane sorting assembly machinery (SAM) complex. This is DnaJ homolog subfamily C member 11 (Dnajc11) from Mus musculus (Mouse).